The sequence spans 70 residues: U2-agatoxin-Ao1b (70 aa).

Residues 1-20 form the signal peptide; the sequence is MRAIISLILISAMVFSMIAA. Positions 21–34 are excised as a propeptide; the sequence is VPEEEGLQLSEDER. Intrachain disulfides connect cysteine 37–cysteine 53, cysteine 44–cysteine 58, and cysteine 52–cysteine 68. Leucine amide is present on leucine 69.

This sequence belongs to the neurotoxin 01 (U2-agtx) family. Expressed by the venom gland.

The protein resides in the secreted. Insect active toxin causing rapid but reversible paralysis in crickets. No activity shown in mammals. Does not show effect on mammalian voltage-gated calcium channels. This Agelena orientalis (Funnel-web spider) protein is U2-agatoxin-Ao1b.